We begin with the raw amino-acid sequence, 274 residues long: Proteasome subunit beta type-5-A (274 aa).

A propeptide spans 1 to 57 (removed in mature form); that stretch reads MKLDTSGFETSMPMIGFGSSSDMLDELSSVPSFDLPRTKEFDGFQKKAKDMLKHAKG. Thr-58 acts as the Nucleophile in catalysis.

This sequence belongs to the peptidase T1B family. Component of the 20S core complex of the 26S proteasome. The 26S proteasome is composed of a core protease (CP), known as the 20S proteasome, capped at one or both ends by the 19S regulatory particle (RP/PA700). The 20S proteasome core is composed of 28 subunits that are arranged in four stacked rings, resulting in a barrel-shaped structure. The two end rings are each formed by seven alpha subunits, and the two central rings are each formed by seven beta subunits. The catalytic chamber with the active sites is on the inside of the barrel. As to expression, ubiquitous low levels, higher expression in siliques and flowers.

It localises to the cytoplasm. The protein localises to the nucleus. The catalysed reaction is Cleavage of peptide bonds with very broad specificity.. The proteasome is a multicatalytic proteinase complex which is characterized by its ability to cleave peptides with Arg, Phe, Tyr, Leu, and Glu adjacent to the leaving group at neutral or slightly basic pH. The proteasome has an ATP-dependent proteolytic activity. The polypeptide is Proteasome subunit beta type-5-A (PBE1) (Arabidopsis thaliana (Mouse-ear cress)).